Here is a 222-residue protein sequence, read N- to C-terminus: Kunitz trypsin inhibitor 3 (222 aa).

Positions 1-23 (MEKLTLSFITLTVLSAIFTAASA) are cleaved as a signal peptide. N-linked (GlcNAc...) asparagine glycosylation is present at Asn65. Cystine bridges form between Cys72-Cys119 and Cys165-Cys173. An N-linked (GlcNAc...) asparagine glycan is attached at Asn175.

This sequence belongs to the protease inhibitor I3 (leguminous Kunitz-type inhibitor) family.

Functionally, exhibits Kunitz trypsin protease inhibitor activity. The sequence is that of Kunitz trypsin inhibitor 3 from Arabidopsis thaliana (Mouse-ear cress).